Here is a 224-residue protein sequence, read N- to C-terminus: 7-cyano-7-deazaguanine synthase (224 aa).

ATP is bound at residue 9–19 (ISGGMDSTLCA). 4 residues coordinate Zn(2+): Cys190, Cys198, Cys201, and Cys204.

This sequence belongs to the QueC family. It depends on Zn(2+) as a cofactor.

It carries out the reaction 7-carboxy-7-deazaguanine + NH4(+) + ATP = 7-cyano-7-deazaguanine + ADP + phosphate + H2O + H(+). The protein operates within purine metabolism; 7-cyano-7-deazaguanine biosynthesis. Functionally, catalyzes the ATP-dependent conversion of 7-carboxy-7-deazaguanine (CDG) to 7-cyano-7-deazaguanine (preQ(0)). In Campylobacter jejuni subsp. jejuni serotype O:6 (strain 81116 / NCTC 11828), this protein is 7-cyano-7-deazaguanine synthase.